The following is a 338-amino-acid chain: Ketol-acid reductoisomerase (NADP(+)) (338 aa).

Residues 1–181 (MNVYYDRDCD…GGGRTGIIET (181 aa)) enclose the KARI N-terminal Rossmann domain. NADP(+)-binding positions include 24–27 (YGSQ), R47, S50, S52, and 82–85 (DEFQ). H107 is an active-site residue. Residue G133 participates in NADP(+) binding. Positions 182–327 (TFKDETETDL…GNLRAMMPWI (146 aa)) constitute a KARI C-terminal knotted domain. Residues D190, E194, E226, and E230 each contribute to the Mg(2+) site. A substrate-binding site is contributed by S251.

It belongs to the ketol-acid reductoisomerase family. Mg(2+) is required as a cofactor.

The catalysed reaction is (2R)-2,3-dihydroxy-3-methylbutanoate + NADP(+) = (2S)-2-acetolactate + NADPH + H(+). It catalyses the reaction (2R,3R)-2,3-dihydroxy-3-methylpentanoate + NADP(+) = (S)-2-ethyl-2-hydroxy-3-oxobutanoate + NADPH + H(+). Its pathway is amino-acid biosynthesis; L-isoleucine biosynthesis; L-isoleucine from 2-oxobutanoate: step 2/4. It participates in amino-acid biosynthesis; L-valine biosynthesis; L-valine from pyruvate: step 2/4. Involved in the biosynthesis of branched-chain amino acids (BCAA). Catalyzes an alkyl-migration followed by a ketol-acid reduction of (S)-2-acetolactate (S2AL) to yield (R)-2,3-dihydroxy-isovalerate. In the isomerase reaction, S2AL is rearranged via a Mg-dependent methyl migration to produce 3-hydroxy-3-methyl-2-ketobutyrate (HMKB). In the reductase reaction, this 2-ketoacid undergoes a metal-dependent reduction by NADPH to yield (R)-2,3-dihydroxy-isovalerate. The protein is Ketol-acid reductoisomerase (NADP(+)) of Trichlorobacter lovleyi (strain ATCC BAA-1151 / DSM 17278 / SZ) (Geobacter lovleyi).